A 59-amino-acid polypeptide reads, in one-letter code: Large ribosomal subunit protein bL32 (59 aa).

The disordered stretch occupies residues 1–59 (MAVQQNKKSPSKRGMHRSHDALTAPALFVDSTTGEVHRPHHISPNGMYRGRKVVKAKGE). Basic residues predominate over residues 49–59 (RGRKVVKAKGE).

It belongs to the bacterial ribosomal protein bL32 family.

The chain is Large ribosomal subunit protein bL32 from Neisseria gonorrhoeae (strain ATCC 700825 / FA 1090).